Reading from the N-terminus, the 155-residue chain is MKFFAVLLLASLAATSLASLNEPKDEIYMESQPTDTSAQVIMSNHQVSSEDLSMEPSISREDLVSKDDVVIKSARRHQNQNPKLLHPVPQESSFRNTATQSEETKELTPGAATTLEGKLVELTHKIIKNLENTMRETMDFLKSLFPHASEVVKPQ.

The signal sequence occupies residues 1–18 (MKFFAVLLLASLAATSLA). Threonine 34 is a glycosylation site (O-linked (GalNAc...) threonine). Phosphoserine is present on residues serine 48, serine 53, serine 57, serine 59, and serine 65. The segment at 74–109 (ARRHQNQNPKLLHPVPQESSFRNTATQSEETKELTP) is disordered. A compositionally biased stretch (polar residues) spans 90-101 (QESSFRNTATQS).

It belongs to the PP3/GlyCAM-1 family. As to expression, highly expressed in whey fraction of camel milk.

The chain is Glycosylation-dependent cell adhesion molecule 1 (GLYCAM1) from Camelus dromedarius (Dromedary).